Reading from the N-terminus, the 436-residue chain is tRNA-2-methylthio-N(6)-dimethylallyladenosine synthase (436 aa).

In terms of domain architecture, MTTase N-terminal spans 5 to 121; the sequence is RKLFIKTYGC…LPDMLDRTEG (117 aa). [4Fe-4S] cluster contacts are provided by Cys14, Cys50, Cys84, Cys158, Cys162, and Cys165. Residues 144-374 form the Radical SAM core domain; that stretch reads ATRGPAAFLT…TEQQRAAQMA (231 aa). One can recognise a TRAM domain in the interval 373–435; that stretch reads MAMVGREVGV…PNSLAGERLG (63 aa).

Belongs to the methylthiotransferase family. MiaB subfamily. In terms of assembly, monomer. The cofactor is [4Fe-4S] cluster.

It is found in the cytoplasm. The enzyme catalyses N(6)-dimethylallyladenosine(37) in tRNA + (sulfur carrier)-SH + AH2 + 2 S-adenosyl-L-methionine = 2-methylsulfanyl-N(6)-dimethylallyladenosine(37) in tRNA + (sulfur carrier)-H + 5'-deoxyadenosine + L-methionine + A + S-adenosyl-L-homocysteine + 2 H(+). Its function is as follows. Catalyzes the methylthiolation of N6-(dimethylallyl)adenosine (i(6)A), leading to the formation of 2-methylthio-N6-(dimethylallyl)adenosine (ms(2)i(6)A) at position 37 in tRNAs that read codons beginning with uridine. The chain is tRNA-2-methylthio-N(6)-dimethylallyladenosine synthase from Cereibacter sphaeroides (strain ATCC 17029 / ATH 2.4.9) (Rhodobacter sphaeroides).